A 207-amino-acid polypeptide reads, in one-letter code: Uridine kinase (207 aa).

Position 11–18 (11–18) interacts with ATP; it reads GGSGSGKT.

It belongs to the uridine kinase family.

It localises to the cytoplasm. It catalyses the reaction uridine + ATP = UMP + ADP + H(+). It carries out the reaction cytidine + ATP = CMP + ADP + H(+). It participates in pyrimidine metabolism; CTP biosynthesis via salvage pathway; CTP from cytidine: step 1/3. Its pathway is pyrimidine metabolism; UMP biosynthesis via salvage pathway; UMP from uridine: step 1/1. In Staphylococcus haemolyticus (strain JCSC1435), this protein is Uridine kinase.